Reading from the N-terminus, the 614-residue chain is Probable Xaa-Pro aminopeptidase P (614 aa).

Mn(2+) contacts are provided by aspartate 409, aspartate 420, glutamate 518, and glutamate 532.

This sequence belongs to the peptidase M24B family. Mn(2+) is required as a cofactor.

It catalyses the reaction Release of any N-terminal amino acid, including proline, that is linked to proline, even from a dipeptide or tripeptide.. Its function is as follows. Catalyzes the removal of a penultimate prolyl residue from the N-termini of peptides. The polypeptide is Probable Xaa-Pro aminopeptidase P (ampp) (Aspergillus niger (strain ATCC MYA-4892 / CBS 513.88 / FGSC A1513)).